A 963-amino-acid polypeptide reads, in one-letter code: Importin-13 (963 aa).

HEAT repeat units follow at residues 24 to 54 (ENVEKALHQLYYDPNIDNKNLAQKWLMQAQV), 56 to 88 (PQAWHFSWQLLQPDKVPEIQYFGASALHIKISR), 95 to 135 (TDQY…LSMM), 142 to 179 (AVADMVRLFQAEDSPVDSQGRCLALLELLTVLPEEFQT), 194 to 231 (LAVECGTVFPLLEQLLQQPSSPSCVRQKVLKCFSSWVQ), 236 to 268 (LQDCEALIQAAFAALQDSELFDSSVEAIVNAIS), 276 to 325 (VNTL…ALLD), 330 to 372 (WQSF…DDIL), 375 to 438 (EAEK…YEML), 440 to 476 (AELLSNLYDKLGRLLTSSEEPYSWQHTEALLYGFQSI), 487 to 522 (VVPGLIGLIPRISISNVQLADTVMFTIGALSEWLAD), 524 to 558 (PVMINSVLPLVLHALGNPELSVSSVSTLKKICREC), 562 to 600 (LPPYAANIVAVSQDVLMKQIHKTSQCMWLMQALGFLLSA), 603 to 648 (VEEI…SNLF), 676 to 716 (PVVV…VKTL), 720 to 754 (FAPMVPQLCEMLGRMYSTVPQASALDLTRQLVHIF), 761 to 803 (FPPI…ALKR), 815 to 845 (VKAVFQCAVLALKFPEAPTVKASCGFFTELL), 860 to 893 (EDGRMLLIAVLEAIGGQASRSLMDCFADILFALN), and 897 to 931 (FSLLSMWIKEALQPPGFPSARLSPEQKDTFSQQIL). Residues 45–111 (AQKWLMQAQV…KAQLFTQITR (67 aa)) enclose the Importin N-terminal domain.

This sequence belongs to the importin beta family. As to quaternary structure, interacts with UBC9, RAN, RBM8A, eIF-1A and PAX6.

The protein resides in the cytoplasm. It localises to the nucleus. Its function is as follows. Functions in nuclear protein import as nuclear transport receptor. Serves as receptor for nuclear localization signals (NLS) in cargo substrates. Is thought to mediate docking of the importin/substrate complex to the nuclear pore complex (NPC) through binding to nucleoporin and the complex is subsequently translocated through the pore by an energy requiring, Ran-dependent mechanism. At the nucleoplasmic side of the NPC, Ran binds to the importin, the importin/substrate complex dissociates and importin is re-exported from the nucleus to the cytoplasm where GTP hydrolysis releases Ran. The directionality of nuclear import is thought to be conferred by an asymmetric distribution of the GTP- and GDP-bound forms of Ran between the cytoplasm and nucleus. Mediates the nuclear import of UBC9, the RBM8A/MAGOH complex, PAX6 and probably other members of the paired homeobox family. Also mediates nuclear export of eIF-1A, and the cytoplasmic release of eIF-1A is triggered by the loading of import substrates onto IPO13. This chain is Importin-13 (Ipo13), found in Mus musculus (Mouse).